The following is a 489-amino-acid chain: Rhamnulokinase (489 aa).

Residue 13 to 17 (ASSGR) participates in ATP binding. A disulfide bond links cysteine 68 and cysteine 222. Substrate contacts are provided by residues glycine 83 and 236 to 238 (HDT). Aspartate 237 functions as the Proton acceptor in the catalytic mechanism. Threonine 259 provides a ligand contact to ATP. Asparagine 296 contributes to the substrate binding site. Glutamine 304 contributes to the ATP binding site. A disulfide bridge links cysteine 353 with cysteine 370. Residue glycine 402 participates in ATP binding. Cysteine 413 and cysteine 417 form a disulfide bridge.

The protein belongs to the rhamnulokinase family. As to quaternary structure, monomer. The cofactor is Mg(2+).

The catalysed reaction is L-rhamnulose + ATP = L-rhamnulose 1-phosphate + ADP + H(+). It functions in the pathway carbohydrate degradation; L-rhamnose degradation; glycerone phosphate from L-rhamnose: step 2/3. Involved in the catabolism of L-rhamnose (6-deoxy-L-mannose). Catalyzes the transfer of the gamma-phosphate group from ATP to the 1-hydroxyl group of L-rhamnulose to yield L-rhamnulose 1-phosphate. The sequence is that of Rhamnulokinase from Escherichia coli (strain 55989 / EAEC).